The chain runs to 451 residues: Phosphoglucosamine mutase (451 aa).

Serine 107 serves as the catalytic Phosphoserine intermediate. Residues serine 107, aspartate 246, aspartate 248, and aspartate 250 each contribute to the Mg(2+) site. Phosphoserine is present on serine 107.

Belongs to the phosphohexose mutase family. It depends on Mg(2+) as a cofactor. Post-translationally, activated by phosphorylation.

It carries out the reaction alpha-D-glucosamine 1-phosphate = D-glucosamine 6-phosphate. Its function is as follows. Catalyzes the conversion of glucosamine-6-phosphate to glucosamine-1-phosphate. The sequence is that of Phosphoglucosamine mutase from Burkholderia cenocepacia (strain HI2424).